Here is a 320-residue protein sequence, read N- to C-terminus: Meso-diaminopimelate D-dehydrogenase (320 aa).

Residues 11–14, 35–37, 65–68, 88–90, and 117–121 each bind NADP(+); these read YGNL, SRR, CMGS, TYD, and TGWDP. Residues Asp-90, Asp-120, Trp-144, 150–151, Thr-169, Arg-195, His-244, and Asn-270 each bind substrate; that span reads QG.

In terms of assembly, homodimer.

It catalyses the reaction meso-2,6-diaminopimelate + NADP(+) + H2O = (S)-2-amino-6-oxoheptanedioate + NH4(+) + NADPH + H(+). Its pathway is amino-acid biosynthesis; L-lysine biosynthesis via DAP pathway; DL-2,6-diaminopimelate from (S)-tetrahydrodipicolinate: step 1/1. L,L-2,6-diaminopimelate and D,D-2,6-diaminopimelate competitively inhibit the oxidative deamination of meso-2,6-diaminopimelate. The enzyme is also inhibited by L-cysteine, and by p-chloromercuribenzoate, iodoacetic acid and HgCl(2) in vitro. Its function is as follows. Catalyzes the reversible NADPH-dependent reductive amination of L-2-amino-6-oxopimelate, the acyclic form of L-tetrahydrodipicolinate, to generate the meso compound, D,L-2,6-diaminopimelate. Probably plays a role in lysine biosynthesis. Exhibits a high substrate specificity for meso-2,6-diaminopimelate, since L,L-2,6-diaminopimelate, D,D-2,6-diaminopimelate, L-glutamate, L-alanine, L-leucine, L-valine, L-aspartate, L-threonine, L-homoserine, L-methionine, L-lysine, L-serine, L-phenylalanine, L-tyrosine, L-tryptophan, L-ornithine, L-histidine, L-arginine, D-glutamate, and D-alanine are not substrates for the oxidative deamination reaction. Can use NAD(+) only poorly since the activity observed in the presence of NAD(+) is about 3% of that with NADP(+). The polypeptide is Meso-diaminopimelate D-dehydrogenase (ddh) (Corynebacterium glutamicum (strain ATCC 13032 / DSM 20300 / JCM 1318 / BCRC 11384 / CCUG 27702 / LMG 3730 / NBRC 12168 / NCIMB 10025 / NRRL B-2784 / 534)).